The chain runs to 642 residues: Threonine--tRNA ligase (642 aa).

Positions 1–61 constitute a TGS domain; that stretch reads MPVITITNGL…MQDSKLDIIT (61 aa). Positions 243 to 534 are catalytic; it reads DHRKIGQQLD…LIEEYAGFFP (292 aa). C334, H385, and H511 together coordinate Zn(2+).

This sequence belongs to the class-II aminoacyl-tRNA synthetase family. In terms of assembly, homodimer. Zn(2+) serves as cofactor.

Its subcellular location is the cytoplasm. The catalysed reaction is tRNA(Thr) + L-threonine + ATP = L-threonyl-tRNA(Thr) + AMP + diphosphate + H(+). Its function is as follows. Catalyzes the attachment of threonine to tRNA(Thr) in a two-step reaction: L-threonine is first activated by ATP to form Thr-AMP and then transferred to the acceptor end of tRNA(Thr). Also edits incorrectly charged L-seryl-tRNA(Thr). This is Threonine--tRNA ligase from Baumannia cicadellinicola subsp. Homalodisca coagulata.